A 125-amino-acid chain; its full sequence is Large ribosomal subunit protein bL12 (125 aa).

The protein belongs to the bacterial ribosomal protein bL12 family. In terms of assembly, homodimer. Part of the ribosomal stalk of the 50S ribosomal subunit. Forms a multimeric L10(L12)X complex, where L10 forms an elongated spine to which 2 to 4 L12 dimers bind in a sequential fashion. Binds GTP-bound translation factors.

Its function is as follows. Forms part of the ribosomal stalk which helps the ribosome interact with GTP-bound translation factors. Is thus essential for accurate translation. The sequence is that of Large ribosomal subunit protein bL12 from Chlorobium limicola (strain DSM 245 / NBRC 103803 / 6330).